The following is a 421-amino-acid chain: Acetate kinase (421 aa).

Asn-7 contacts Mg(2+). ATP is bound at residue Lys-14. Arg-91 contacts substrate. Asp-148 (proton donor/acceptor) is an active-site residue. ATP contacts are provided by residues 208 to 212 (HIGNG) and 283 to 285 (DRR). Glu-387 serves as a coordination point for Mg(2+).

It belongs to the acetokinase family. In terms of assembly, homodimer. It depends on Mg(2+) as a cofactor. The cofactor is Mn(2+).

It is found in the cytoplasm. It catalyses the reaction acetate + ATP = acetyl phosphate + ADP. It functions in the pathway metabolic intermediate biosynthesis; acetyl-CoA biosynthesis; acetyl-CoA from acetate: step 1/2. Its function is as follows. Catalyzes the formation of acetyl phosphate from acetate and ATP. Can also catalyze the reverse reaction. The protein is Acetate kinase of Geobacter metallireducens (strain ATCC 53774 / DSM 7210 / GS-15).